We begin with the raw amino-acid sequence, 230 residues long: Large ribosomal subunit protein uL1 (230 aa).

This sequence belongs to the universal ribosomal protein uL1 family. Part of the 50S ribosomal subunit.

Binds directly to 23S rRNA. The L1 stalk is quite mobile in the ribosome, and is involved in E site tRNA release. Its function is as follows. Protein L1 is also a translational repressor protein, it controls the translation of the L11 operon by binding to its mRNA. In Leptospira interrogans serogroup Icterohaemorrhagiae serovar copenhageni (strain Fiocruz L1-130), this protein is Large ribosomal subunit protein uL1.